The chain runs to 20 residues: Brevinin-1ITa (20 aa).

Met-8 carries the post-translational modification Methionine sulfoxide; partial. Cysteines 14 and 20 form a disulfide.

It belongs to the frog skin active peptide (FSAP) family. Brevinin subfamily. As to expression, expressed by the skin glands.

It is found in the secreted. In terms of biological role, antimicrobial peptide active against Gram-positive bacterium S.epidermidis ATCC 12228 (MIC=4 uM), against Gram-negative bacterium E.coli ATCC 25922 (MIC=64 uM) and against yeast C.parapsilosis ATCC 22019 (MIC=16 uM). Has hemolytic and cytotoxic activity. This Rana italica (Italian stream frog) protein is Brevinin-1ITa.